We begin with the raw amino-acid sequence, 362 residues long: Chorismate synthase (362 aa).

Arg-46 serves as a coordination point for NADP(+). FMN is bound by residues 122–124, 238–239, Gly-278, 293–297, and Arg-319; these read RSS, NA, and KPTPS.

This sequence belongs to the chorismate synthase family. Homotetramer. FMNH2 serves as cofactor.

It carries out the reaction 5-O-(1-carboxyvinyl)-3-phosphoshikimate = chorismate + phosphate. It functions in the pathway metabolic intermediate biosynthesis; chorismate biosynthesis; chorismate from D-erythrose 4-phosphate and phosphoenolpyruvate: step 7/7. Catalyzes the anti-1,4-elimination of the C-3 phosphate and the C-6 proR hydrogen from 5-enolpyruvylshikimate-3-phosphate (EPSP) to yield chorismate, which is the branch point compound that serves as the starting substrate for the three terminal pathways of aromatic amino acid biosynthesis. This reaction introduces a second double bond into the aromatic ring system. This Campylobacter jejuni subsp. jejuni serotype O:23/36 (strain 81-176) protein is Chorismate synthase.